A 397-amino-acid polypeptide reads, in one-letter code: Elongation factor Tu (397 aa).

A tr-type G domain is found at 10–207 (KPHLNIGTIG…AVDAYIPEPE (198 aa)). The tract at residues 19–26 (GHVDHGKT) is G1. 19-26 (GHVDHGKT) lines the GTP pocket. Thr26 provides a ligand contact to Mg(2+). Positions 60–64 (GVTIN) are G2. The interval 81–84 (DCPG) is G3. GTP-binding positions include 81–85 (DCPGH) and 136–139 (NKVD). The tract at residues 136-139 (NKVD) is G4. Residues 174–176 (SAL) form a G5 region.

Belongs to the TRAFAC class translation factor GTPase superfamily. Classic translation factor GTPase family. EF-Tu/EF-1A subfamily. In terms of assembly, monomer.

The protein resides in the cytoplasm. It catalyses the reaction GTP + H2O = GDP + phosphate + H(+). GTP hydrolase that promotes the GTP-dependent binding of aminoacyl-tRNA to the A-site of ribosomes during protein biosynthesis. The polypeptide is Elongation factor Tu (Syntrophus aciditrophicus (strain SB)).